The sequence spans 467 residues: ATP synthase subunit beta (467 aa).

154–161 (GGAGVGKT) provides a ligand contact to ATP.

Belongs to the ATPase alpha/beta chains family. As to quaternary structure, F-type ATPases have 2 components, CF(1) - the catalytic core - and CF(0) - the membrane proton channel. CF(1) has five subunits: alpha(3), beta(3), gamma(1), delta(1), epsilon(1). CF(0) has three main subunits: a(1), b(2) and c(9-12). The alpha and beta chains form an alternating ring which encloses part of the gamma chain. CF(1) is attached to CF(0) by a central stalk formed by the gamma and epsilon chains, while a peripheral stalk is formed by the delta and b chains.

It localises to the cell inner membrane. The enzyme catalyses ATP + H2O + 4 H(+)(in) = ADP + phosphate + 5 H(+)(out). Its function is as follows. Produces ATP from ADP in the presence of a proton gradient across the membrane. The catalytic sites are hosted primarily by the beta subunits. The polypeptide is ATP synthase subunit beta (Leptospira interrogans serogroup Icterohaemorrhagiae serovar copenhageni (strain Fiocruz L1-130)).